The sequence spans 305 residues: Lipoyl synthase (305 aa).

Residues Cys41, Cys46, Cys52, Cys68, Cys72, Cys75, and Ser281 each coordinate [4Fe-4S] cluster. Residues 54 to 270 (GARRTATFMI…RKVAMDKGFK (217 aa)) enclose the Radical SAM core domain. Over residues 283 to 298 (HADEQVNEAAKEKQRQ) the composition is skewed to basic and acidic residues. The disordered stretch occupies residues 283–305 (HADEQVNEAAKEKQRQGEAQLNS).

It belongs to the radical SAM superfamily. Lipoyl synthase family. [4Fe-4S] cluster serves as cofactor.

The protein resides in the cytoplasm. It carries out the reaction [[Fe-S] cluster scaffold protein carrying a second [4Fe-4S](2+) cluster] + N(6)-octanoyl-L-lysyl-[protein] + 2 oxidized [2Fe-2S]-[ferredoxin] + 2 S-adenosyl-L-methionine + 4 H(+) = [[Fe-S] cluster scaffold protein] + N(6)-[(R)-dihydrolipoyl]-L-lysyl-[protein] + 4 Fe(3+) + 2 hydrogen sulfide + 2 5'-deoxyadenosine + 2 L-methionine + 2 reduced [2Fe-2S]-[ferredoxin]. Its pathway is protein modification; protein lipoylation via endogenous pathway; protein N(6)-(lipoyl)lysine from octanoyl-[acyl-carrier-protein]. Its function is as follows. Catalyzes the radical-mediated insertion of two sulfur atoms into the C-6 and C-8 positions of the octanoyl moiety bound to the lipoyl domains of lipoate-dependent enzymes, thereby converting the octanoylated domains into lipoylated derivatives. The polypeptide is Lipoyl synthase (Staphylococcus aureus (strain Mu3 / ATCC 700698)).